The following is a 578-amino-acid chain: Phenylalanine--tRNA ligase beta subunit (578 aa).

Positions 292–370 constitute a B5 domain; the sequence is FDTDEKSVSH…RAYGFDNLEP (79 aa). Positions 348, 354, 357, and 358 each coordinate Mg(2+).

It belongs to the phenylalanyl-tRNA synthetase beta subunit family. Type 2 subfamily. As to quaternary structure, tetramer of two alpha and two beta subunits. The cofactor is Mg(2+).

It is found in the cytoplasm. It catalyses the reaction tRNA(Phe) + L-phenylalanine + ATP = L-phenylalanyl-tRNA(Phe) + AMP + diphosphate + H(+). The polypeptide is Phenylalanine--tRNA ligase beta subunit (Halorubrum lacusprofundi (strain ATCC 49239 / DSM 5036 / JCM 8891 / ACAM 34)).